The primary structure comprises 494 residues: MGIGKDGTLPWKLPGDLKFFKDITVTTSDPSKKNAVVMGRKTWESIPLKFRPLPGRLNVILTRSGSFDFATAENVVICGSLDSALQLLATTPYCLTVEKTFIIGGGEILRQSLNAPACEAIHLTDIESSIECDTFIPPIDLSMFHPWYSSFPVVENGIKHSFISFVRVTKSIAEANDSSGKELTGNDSKKVKFEIENFSFLPKMIFERHEEYQYLNLVQDIIRNGAKKNDRTGTGTVSKFGCQMRFNLRRNFPLLTTKRVFWRGVLEELLWFISGSTNAKVLQEKGIHIWDGNASRQYLDSIGLTQREEGDLGPVYGFQWRHFGAEYTDMHADYVGKGFDQLMDVIDKIKNNPDDRRIILSAWNPTDLKKMALPPCHMFAQFYVENGELSCQMYQRSADMGLGVPFNIASYSLLTCMIAQVCDLSPGDFVHVIGDAHVYRTHVEALEEQMRKQPKPFPILKINPVKKDIDSFVTSDFKLVRYDPHHKIEMKMAV.

The DHFR domain maps to 1 to 167; that stretch reads MGIGKDGTLP…IKHSFISFVR (167 aa). 2–8 serves as a coordination point for NADP(+); the sequence is GIGKDGT. D16 is a substrate binding site. Residues 40–42 and 61–64 each bind NADP(+); these read RKT and LTRS. I103 lines the substrate pocket. 104 to 111 provides a ligand contact to NADP(+); the sequence is GGGEILRQ. T124 contributes to the substrate binding site. The segment at 170 to 494 is thymidylate synthase; sequence KSIAEANDSS…HHKIEMKMAV (325 aa). Residue R231 participates in dUMP binding. Residue C376 is part of the active site. DUMP-binding positions include H377, 395–399, N407, and 437–439; these read QRSAD and HVY.

The protein in the N-terminal section; belongs to the dihydrofolate reductase family. This sequence in the C-terminal section; belongs to the thymidylate synthase family.

It catalyses the reaction (6S)-5,6,7,8-tetrahydrofolate + NADP(+) = 7,8-dihydrofolate + NADPH + H(+). The enzyme catalyses dUMP + (6R)-5,10-methylene-5,6,7,8-tetrahydrofolate = 7,8-dihydrofolate + dTMP. Its pathway is cofactor biosynthesis; tetrahydrofolate biosynthesis; 5,6,7,8-tetrahydrofolate from 7,8-dihydrofolate: step 1/1. Functionally, bifunctional enzyme. Involved in de novo dTMP biosynthesis. Key enzyme in folate metabolism. Can play two different roles depending on the source of dihydrofolate: de novo synthesis of tetrahydrofolate or recycling of the dihydrofolate released as one of the end products of the TS catalyzed reaction. Catalyzes an essential reaction for de novo glycine and purine synthesis, DNA precursor synthesis, and for the conversion of dUMP to dTMP. This is Putative bifunctional dihydrofolate reductase-thymidylate synthase from Oryza sativa subsp. japonica (Rice).